A 140-amino-acid polypeptide reads, in one-letter code: Nucleoside diphosphate kinase (140 aa).

ATP-binding residues include Lys11, Phe59, Arg87, Thr93, Arg104, and Asn114. The active-site Pros-phosphohistidine intermediate is the His117.

Belongs to the NDK family. Homotetramer. The cofactor is Mg(2+).

It is found in the cytoplasm. The enzyme catalyses a 2'-deoxyribonucleoside 5'-diphosphate + ATP = a 2'-deoxyribonucleoside 5'-triphosphate + ADP. It catalyses the reaction a ribonucleoside 5'-diphosphate + ATP = a ribonucleoside 5'-triphosphate + ADP. Major role in the synthesis of nucleoside triphosphates other than ATP. The ATP gamma phosphate is transferred to the NDP beta phosphate via a ping-pong mechanism, using a phosphorylated active-site intermediate. The protein is Nucleoside diphosphate kinase of Cereibacter sphaeroides (strain ATCC 17025 / ATH 2.4.3) (Rhodobacter sphaeroides).